The following is a 59-amino-acid chain: Sec-independent protein translocase protein TatA (59 aa).

A helical transmembrane segment spans residues 1–21 (MGRLGLTEILVIVGIVILLFG).

The protein belongs to the TatA/E family. As to quaternary structure, forms a complex with TatC.

The protein resides in the cell inner membrane. Its function is as follows. Part of the twin-arginine translocation (Tat) system that transports large folded proteins containing a characteristic twin-arginine motif in their signal peptide across membranes. TatA could form the protein-conducting channel of the Tat system. The polypeptide is Sec-independent protein translocase protein TatA (Flavobacterium johnsoniae (strain ATCC 17061 / DSM 2064 / JCM 8514 / BCRC 14874 / CCUG 350202 / NBRC 14942 / NCIMB 11054 / UW101) (Cytophaga johnsonae)).